The chain runs to 80 residues: Putative membrane protein insertion efficiency factor (80 aa).

The disordered stretch occupies residues 60–80 (SKTGKDPVPDRFSLKRNQEGE). Positions 62–80 (TGKDPVPDRFSLKRNQEGE) are enriched in basic and acidic residues.

It belongs to the UPF0161 family.

The protein resides in the cell membrane. Could be involved in insertion of integral membrane proteins into the membrane. In Streptococcus pneumoniae serotype 4 (strain ATCC BAA-334 / TIGR4), this protein is Putative membrane protein insertion efficiency factor.